Reading from the N-terminus, the 453-residue chain is Ribulose bisphosphate carboxylase large chain (453 aa).

Residues 1-2 (MS) constitute a propeptide that is removed on maturation. The residue at position 3 (proline 3) is an N-acetylproline. Lysine 14 bears the N6,N6,N6-trimethyllysine mark. The substrate site is built by asparagine 123 and threonine 173. Lysine 175 functions as the Proton acceptor in the catalytic mechanism. Lysine 177 contributes to the substrate binding site. Residues lysine 201, aspartate 203, and glutamate 204 each coordinate Mg(2+). An N6-carboxylysine modification is found at lysine 201. Residue histidine 294 is the Proton acceptor of the active site. Substrate-binding residues include arginine 295, histidine 327, and serine 379.

Belongs to the RuBisCO large chain family. Type I subfamily. Heterohexadecamer of 8 large chains and 8 small chains; disulfide-linked. The disulfide link is formed within the large subunit homodimers. The cofactor is Mg(2+). The disulfide bond which can form in the large chain dimeric partners within the hexadecamer appears to be associated with oxidative stress and protein turnover.

The protein resides in the plastid. The protein localises to the chloroplast. It carries out the reaction 2 (2R)-3-phosphoglycerate + 2 H(+) = D-ribulose 1,5-bisphosphate + CO2 + H2O. The catalysed reaction is D-ribulose 1,5-bisphosphate + O2 = 2-phosphoglycolate + (2R)-3-phosphoglycerate + 2 H(+). Its function is as follows. RuBisCO catalyzes two reactions: the carboxylation of D-ribulose 1,5-bisphosphate, the primary event in carbon dioxide fixation, as well as the oxidative fragmentation of the pentose substrate in the photorespiration process. Both reactions occur simultaneously and in competition at the same active site. In Galium album (White bedstraw), this protein is Ribulose bisphosphate carboxylase large chain.